We begin with the raw amino-acid sequence, 358 residues long: MLWLDQYRPKTLASLDYHKQLSERLISLSSTNEFPHLLVYGPSGAGKKTRVVAILRELYGPGSEKLKIDQRTFLTPSSKKLQINIVSSLHHLEITPSDVGNYDRVIMQELLKDVAQSAQVDLQAKKIFKVVVINVADELTRDAQAALRRTMEKYSNNIRLILIANSTSKIIEPIRSRTLMVRVAAPTPEEIILVMSKILTAQGLEAPDSLLNNIANNCDRNLRKAILLLETVHAKSPGNKQLIDTGAQLPLPDWQTFIQQVGDSMLQEQSPARILAVRSMLYDLLSHCIPPTTILKELLSFFLSKVDTKLHPYLIQAAANYEHRTRMGNKSIFHLEAFVAYFMKVYAMLQLGMELPSY.

The protein belongs to the activator 1 small subunits family. In terms of assembly, heteropentamer of subunits rfc1, rfc2, rfc3, rfc4 and rfc5 that forms a complex (RFC) with PCNA in the presence of ATP. Two other complexes exist where rfc1 can be replaced by either ctf18 or elg1 to form the ctf18-RFC or the elg1-RFC complexes respectively.

It localises to the nucleus. In terms of biological role, the elongation of primed DNA templates by DNA polymerase delta and epsilon requires the action of the accessory proteins PCNA and activator 1. The sequence is that of Replication factor C subunit 5 (rfc5) from Schizosaccharomyces pombe (strain 972 / ATCC 24843) (Fission yeast).